The chain runs to 134 residues: Large ribosomal subunit protein bL19 (134 aa).

The disordered stretch occupies residues 110–134 (ARLHQEEGPSSAAPASTPPAAAPQA). The span at 125-134 (STPPAAAPQA) shows a compositional bias: pro residues.

It belongs to the bacterial ribosomal protein bL19 family.

Its function is as follows. This protein is located at the 30S-50S ribosomal subunit interface and may play a role in the structure and function of the aminoacyl-tRNA binding site. In Anaeromyxobacter sp. (strain Fw109-5), this protein is Large ribosomal subunit protein bL19.